Reading from the N-terminus, the 91-residue chain is Large ribosomal subunit protein bL28 (91 aa).

Residues 1 to 23 are disordered; sequence MSRVCELTGKGPMSGNNVSHANN.

It belongs to the bacterial ribosomal protein bL28 family.

This Paracoccus denitrificans (strain Pd 1222) protein is Large ribosomal subunit protein bL28.